Reading from the N-terminus, the 2758-residue chain is Highly reducing polyketide synthase NEC1 (2758 aa).

One can recognise a Ketosynthase family 3 (KS3) domain in the interval Glu-153–Asp-492. Residues Pro-512–Thr-576 are disordered. The segment covering Thr-566–Thr-576 has biased composition (low complexity). The segment at Val-700–Asp-1044 is malonyl-CoA:ACP transacylase (MAT) domain. The For malonyltransferase activity role is filled by Ser-790. The interval His-1124 to Thr-1255 is N-terminal hotdog fold. The dehydratase (DH) domain stretch occupies residues His-1124 to Ser-1442. A PKS/mFAS DH domain is found at His-1124 to Ser-1443. His-1156 functions as the Proton acceptor; for dehydratase activity in the catalytic mechanism. Residues Thr-1283–Ser-1443 form a C-terminal hotdog fold region. Asp-1351 functions as the Proton donor; for dehydratase activity in the catalytic mechanism. The segment at Leu-1622–Leu-1727 is methyltransferase (CMet) domain. Residues Gly-2031–Leu-2344 are enoyl reductase (ER) domain. The interval Ala-2372–Val-2553 is ketoreductase (KR) domain. Residues Glu-2673 to Ser-2750 enclose the Carrier domain. Position 2710 is an O-(pantetheine 4'-phosphoryl)serine (Ser-2710).

In terms of biological role, highly reducing polyketide synthase; part of the gene cluster that mediates the biosynthesis of nectriapyrone and its analogs phomopyrone A, acropyrone and zaepyrone. The nectriapyrone biosynthetic gene cluster consists of two genes, the highly reducing polyketide synthase NEC1 that produces a demethylated analog of nectriapyrone from one unit of acetyl-CoA and one unit of malonyl-CoA; and the O-methyltransferase NEC2 that further methylates the NEC1 product to yield nectriapyrone. Nectriapyrone is further hydrolyzed to nectriapyrone D, also known as gulypyrone B, by an unidentified hydrolase localized outside the nectriapyrone cluster. The chain is Highly reducing polyketide synthase NEC1 from Pyricularia oryzae (strain 70-15 / ATCC MYA-4617 / FGSC 8958) (Rice blast fungus).